Reading from the N-terminus, the 34-residue chain is Cycloamanide E proprotein (34 aa).

Positions 1-10 (MSDINAARLP) are excised as a propeptide. The cyclopeptide (Ser-Pro) cross-link spans 11 to 17 (SFFFPVP). Residues 18 to 34 (CISDDIEMVLTRGESLC) constitute a propeptide that is removed on maturation.

Belongs to the MSDIN fungal toxin family. Processed by the macrocyclase-peptidase enzyme POPB to yield a cyclic decapeptide. POPB first removes 10 residues from the N-terminus. Conformational trapping of the remaining peptide forces the enzyme to release this intermediate rather than proceed to macrocyclization. The enzyme rebinds the remaining peptide in a different conformation and catalyzes macrocyclization of the N-terminal 7 residues.

Cyclic heptapeptide that belongs to the MSDIN-like toxin family responsible for a large number of food poisoning cases and deaths. Cycloaminide E is structurally related to other cycloamanides that are non-toxic to mammals but show immunosuppressive activity. The sequence is that of Cycloamanide E proprotein from Amanita phalloides (Death cap).